The primary structure comprises 415 residues: Phosphoglycerate transport system transcriptional regulatory protein PgtA (415 aa).

A Response regulatory domain is found at 7–121; it reads SILLIDDDVD…KLLILIEDAL (115 aa). Aspartate 56 is subject to 4-aspartylphosphate. Residues 142 to 341 form the Sigma-54 factor interaction domain; the sequence is LIGRSEWMNQ…LANAAELFAV (200 aa). An ATP-binding site is contributed by 170 to 177; that stretch reads GEHGTGRM. The H-T-H motif DNA-binding region spans 385–404; that stretch reads INEVAEYLQIPRKKLYLRMK.

Phosphorylated by PgtB.

Its subcellular location is the cytoplasm. In terms of biological role, member of the two-component regulatory system PgtB/PgtA that regulates the inducible phosphoglycerate transport system. When activated by PgtB it acts in conjunction with sigma-54 as a transcriptional activator. The sequence is that of Phosphoglycerate transport system transcriptional regulatory protein PgtA (pgtA) from Salmonella typhimurium (strain LT2 / SGSC1412 / ATCC 700720).